A 194-amino-acid chain; its full sequence is 3-isopropylmalate dehydratase small subunit (194 aa).

Belongs to the LeuD family. LeuD type 1 subfamily. In terms of assembly, heterodimer of LeuC and LeuD.

It carries out the reaction (2R,3S)-3-isopropylmalate = (2S)-2-isopropylmalate. It functions in the pathway amino-acid biosynthesis; L-leucine biosynthesis; L-leucine from 3-methyl-2-oxobutanoate: step 2/4. Functionally, catalyzes the isomerization between 2-isopropylmalate and 3-isopropylmalate, via the formation of 2-isopropylmaleate. In Limosilactobacillus fermentum (strain NBRC 3956 / LMG 18251) (Lactobacillus fermentum), this protein is 3-isopropylmalate dehydratase small subunit.